Consider the following 268-residue polypeptide: Phosphatidylglycerol--prolipoprotein diacylglyceryl transferase (268 aa).

Helical transmembrane passes span Ile23–Ala43, Leu62–Tyr82, Val97–Trp117, Phe132–Leu152, Ser179–Ile199, Ala206–Val226, and Gly241–Ser261. Arg145 is a binding site for a 1,2-diacyl-sn-glycero-3-phospho-(1'-sn-glycerol).

Belongs to the Lgt family.

The protein localises to the cell inner membrane. It carries out the reaction L-cysteinyl-[prolipoprotein] + a 1,2-diacyl-sn-glycero-3-phospho-(1'-sn-glycerol) = an S-1,2-diacyl-sn-glyceryl-L-cysteinyl-[prolipoprotein] + sn-glycerol 1-phosphate + H(+). Its pathway is protein modification; lipoprotein biosynthesis (diacylglyceryl transfer). In terms of biological role, catalyzes the transfer of the diacylglyceryl group from phosphatidylglycerol to the sulfhydryl group of the N-terminal cysteine of a prolipoprotein, the first step in the formation of mature lipoproteins. This Haemophilus influenzae (strain PittEE) protein is Phosphatidylglycerol--prolipoprotein diacylglyceryl transferase.